Here is a 261-residue protein sequence, read N- to C-terminus: MAAILRYQLELFLLAVSFFSRIPVPVSLPYSSERMNQAGRYFALVGLLLGAICALVYSLATQLFSTNISVFLTMVLSLLLTGAFHEDGLADMADGVGGGMTAERRLEIMKDSRIGTYGSSALIMVLLGKYLLLTELADLTSLVPVWLLAYTLSRAVAASLIRNTPYVSDTDSSKSKPLAQQLSGTDVAVLSLTALATLLYFSWQFIGVMIAASLIFRQIFRQWLIRRLGGFTGDCLGAAQQLMEILIYLILLAFLQHEVMI.

Transmembrane regions (helical) follow at residues 9–29 (LELF…VSLP), 41–61 (YFAL…SLAT), 64–84 (FSTN…TGAF), 114–134 (IGTY…LLLT), 141–161 (SLVP…ASLI), 196–216 (ATLL…SLIF), and 235–255 (CLGA…LAFL).

The protein belongs to the CobS family. The cofactor is Mg(2+).

Its subcellular location is the cell inner membrane. The catalysed reaction is alpha-ribazole + adenosylcob(III)inamide-GDP = adenosylcob(III)alamin + GMP + H(+). It carries out the reaction alpha-ribazole 5'-phosphate + adenosylcob(III)inamide-GDP = adenosylcob(III)alamin 5'-phosphate + GMP + H(+). Its pathway is cofactor biosynthesis; adenosylcobalamin biosynthesis; adenosylcobalamin from cob(II)yrinate a,c-diamide: step 7/7. In terms of biological role, joins adenosylcobinamide-GDP and alpha-ribazole to generate adenosylcobalamin (Ado-cobalamin). Also synthesizes adenosylcobalamin 5'-phosphate from adenosylcobinamide-GDP and alpha-ribazole 5'-phosphate. This is Adenosylcobinamide-GDP ribazoletransferase from Vibrio cholerae serotype O1 (strain ATCC 39541 / Classical Ogawa 395 / O395).